The primary structure comprises 100 residues: Urease subunit gamma (100 aa).

Belongs to the urease gamma subunit family. In terms of assembly, heterotrimer of UreA (gamma), UreB (beta) and UreC (alpha) subunits. Three heterotrimers associate to form the active enzyme.

It localises to the cytoplasm. It catalyses the reaction urea + 2 H2O + H(+) = hydrogencarbonate + 2 NH4(+). It functions in the pathway nitrogen metabolism; urea degradation; CO(2) and NH(3) from urea (urease route): step 1/1. In Delftia acidovorans (strain DSM 14801 / SPH-1), this protein is Urease subunit gamma.